The primary structure comprises 256 residues: Probable ATP-dependent transporter slr0075 (256 aa).

The ABC transporter domain maps to 6 to 250; that stretch reads LSIKNLTASV…EEKGYDFLDE (245 aa). Residue 38–45 coordinates ATP; sequence GRNGSGKS.

This sequence belongs to the ABC transporter superfamily. Ycf16 family.

The sequence is that of Probable ATP-dependent transporter slr0075 from Synechocystis sp. (strain ATCC 27184 / PCC 6803 / Kazusa).